The primary structure comprises 277 residues: Tryptophan synthase alpha chain (277 aa).

Active-site proton acceptor residues include Glu51 and Glu62.

Belongs to the TrpA family. In terms of assembly, tetramer of two alpha and two beta chains.

It carries out the reaction (1S,2R)-1-C-(indol-3-yl)glycerol 3-phosphate + L-serine = D-glyceraldehyde 3-phosphate + L-tryptophan + H2O. The protein operates within amino-acid biosynthesis; L-tryptophan biosynthesis; L-tryptophan from chorismate: step 5/5. Functionally, the alpha subunit is responsible for the aldol cleavage of indoleglycerol phosphate to indole and glyceraldehyde 3-phosphate. This is Tryptophan synthase alpha chain from Phenylobacterium zucineum (strain HLK1).